Consider the following 107-residue polypeptide: Large ribosomal subunit protein eL33B (107 aa).

N-acetylalanine; partial is present on A2. A Glycyl lysine isopeptide (Lys-Gly) (interchain with G-Cter in ubiquitin) cross-link involves residue K47.

Belongs to the eukaryotic ribosomal protein eL33 family. In terms of assembly, component of the large ribosomal subunit (LSU). Mature yeast ribosomes consist of a small (40S) and a large (60S) subunit. The 40S small subunit contains 1 molecule of ribosomal RNA (18S rRNA) and 33 different proteins (encoded by 57 genes). The large 60S subunit contains 3 rRNA molecules (25S, 5.8S and 5S rRNA) and 46 different proteins (encoded by 81 genes). Post-translationally, N-terminally acetylated by acetyltransferase NatA.

It localises to the cytoplasm. In terms of biological role, component of the ribosome, a large ribonucleoprotein complex responsible for the synthesis of proteins in the cell. The small ribosomal subunit (SSU) binds messenger RNAs (mRNAs) and translates the encoded message by selecting cognate aminoacyl-transfer RNA (tRNA) molecules. The large subunit (LSU) contains the ribosomal catalytic site termed the peptidyl transferase center (PTC), which catalyzes the formation of peptide bonds, thereby polymerizing the amino acids delivered by tRNAs into a polypeptide chain. The nascent polypeptides leave the ribosome through a tunnel in the LSU and interact with protein factors that function in enzymatic processing, targeting, and the membrane insertion of nascent chains at the exit of the ribosomal tunnel. The polypeptide is Large ribosomal subunit protein eL33B (Saccharomyces cerevisiae (strain ATCC 204508 / S288c) (Baker's yeast)).